A 340-amino-acid polypeptide reads, in one-letter code: Protein pelota homolog (340 aa).

The protein belongs to the eukaryotic release factor 1 family. Pelota subfamily. Monomer. Requires a divalent metal cation as cofactor.

The protein resides in the cytoplasm. Its function is as follows. May function in recognizing stalled ribosomes, interact with stem-loop structures in stalled mRNA molecules, and effect endonucleolytic cleavage of the mRNA. May play a role in the release non-functional ribosomes and degradation of damaged mRNAs. Has endoribonuclease activity. This Methanosphaerula palustris (strain ATCC BAA-1556 / DSM 19958 / E1-9c) protein is Protein pelota homolog.